Here is a 733-residue protein sequence, read N- to C-terminus: Polyribonucleotide nucleotidyltransferase (733 aa).

Residues D503 and D509 each coordinate Mg(2+). In terms of domain architecture, KH spans 570-629; that stretch reads PRLTTIQIPVDAIGMVIGKGGETIRSITEETGAEINIDDDGTVTIACSSPEATKAAVETI. Residues 639-713 enclose the S1 motif domain; the sequence is GTIYMGKVRD…GKTKFALSIK (75 aa).

Belongs to the polyribonucleotide nucleotidyltransferase family. Mg(2+) is required as a cofactor.

It is found in the cytoplasm. The catalysed reaction is RNA(n+1) + phosphate = RNA(n) + a ribonucleoside 5'-diphosphate. Involved in mRNA degradation. Catalyzes the phosphorolysis of single-stranded polyribonucleotides processively in the 3'- to 5'-direction. This Chlorobaculum tepidum (strain ATCC 49652 / DSM 12025 / NBRC 103806 / TLS) (Chlorobium tepidum) protein is Polyribonucleotide nucleotidyltransferase.